Reading from the N-terminus, the 551-residue chain is Cytochrome bc1 complex cytochrome b subunit (551 aa).

A helical membrane pass occupies residues 44–64; it reads FLLGEIALYSFIVLLLTGVYL. Heme contacts are provided by H113 and H127. The next 3 helical transmembrane spans lie at 117–137, 145–165, and 188–208; these read ALMF…TGAF, WVIG…GYSM, and VIGT…TILI. Positions 215 and 230 each coordinate heme. Helical transmembrane passes span 216 to 236, 265 to 285, 334 to 354, 380 to 400, and 417 to 437; these read ILLI…LVWF, SGAF…FLQI, PVWV…YPFL, IGAM…NDII, and IGMV…CIGL. Positions 532–551 are disordered; it reads ALREHQDSIASSPNGERGKH.

This sequence belongs to the cytochrome b family. In terms of assembly, the cytochrome bc1 complex is composed of a cytochrome b (QcrB), the Rieske iron-sulfur protein (QcrA) and a diheme cytochrome c (QcrC) subunit. Heme is required as a cofactor.

It localises to the cell membrane. The catalysed reaction is a quinol + 2 Fe(III)-[cytochrome c](out) = a quinone + 2 Fe(II)-[cytochrome c](out) + 2 H(+)(out). Its function is as follows. Cytochrome b subunit of the cytochrome bc1 complex, an essential component of the respiratory electron transport chain required for ATP synthesis. The bc1 complex catalyzes the oxidation of ubiquinol and the reduction of cytochrome c in the respiratory chain. The bc1 complex operates through a Q-cycle mechanism that couples electron transfer to generation of the proton gradient that drives ATP synthesis. The cytochrome b subunit contains two ubiquinol reactive sites: the oxidation (QP) site and the reduction (QN) site. The sequence is that of Cytochrome bc1 complex cytochrome b subunit (qcrB) from Mycobacterium leprae (strain TN).